We begin with the raw amino-acid sequence, 262 residues long: MSHGGGGHAAELFPEDQVLAFGAVLSLVGIYIAHFFPSLAMLLGGLLAAGACVAGANTTRRVAAYGLGTGVPSIGMVSLGMGTISALAGVLIPSAFGLPVLVTPILAAVIAVVVGFIVGKLTQNPVGMKVPIIVSSMTKLSLMGALAILGFCTAFAGGFSADIIINGAINNGVIALAFIAAGMAILHPFNACIGPDESHKRTMTLAVACGFMAWLVFAIAKLDIVSTAVAAIFWFIAYGTFVKTSLADACEVKYVPELPKKE.

A run of 7 helical transmembrane segments spans residues 27–47, 72–92, 98–118, 145–165, 173–193, 200–220, and 222–242; these read LVGI…GGLL, PSIG…GVLI, LPVL…GFIV, ALAI…DIII, VIAL…NACI, KRTM…FAIA, and LDIV…GTFV.

The protein belongs to the MtrC family. The complex is composed of 8 subunits; MtrA, MtrB, MtrC, MtrD, MtrE, MtrF, MtrG and MtrH.

The protein resides in the cell membrane. It carries out the reaction 5-methyl-5,6,7,8-tetrahydromethanopterin + coenzyme M + 2 Na(+)(in) = 5,6,7,8-tetrahydromethanopterin + methyl-coenzyme M + 2 Na(+)(out). It functions in the pathway one-carbon metabolism; methanogenesis from CO(2); methyl-coenzyme M from 5,10-methylene-5,6,7,8-tetrahydromethanopterin: step 2/2. Its function is as follows. Part of a complex that catalyzes the formation of methyl-coenzyme M and tetrahydromethanopterin from coenzyme M and methyl-tetrahydromethanopterin. This is an energy-conserving, sodium-ion translocating step. This chain is Tetrahydromethanopterin S-methyltransferase subunit C, found in Methanococcus maripaludis (strain C5 / ATCC BAA-1333).